Consider the following 663-residue polypeptide: Translation factor GUF1 homolog, mitochondrial (663 aa).

Residues 1–33 constitute a mitochondrion transit peptide; sequence MAGAAALRRSARRVVLPGAYALSRALQHPERLL. The tr-type G domain occupies 55–247; that stretch reads ERVRNFSIIA…AVIERIPSPP (193 aa). Residues 64–71, 140–144, and 194–197 each bind GTP; these read AHVDHGKS, DTPGH, and NKID.

The protein belongs to the TRAFAC class translation factor GTPase superfamily. Classic translation factor GTPase family. LepA subfamily.

The protein resides in the mitochondrion inner membrane. It catalyses the reaction GTP + H2O = GDP + phosphate + H(+). Promotes mitochondrial protein synthesis. May act as a fidelity factor of the translation reaction, by catalyzing a one-codon backward translocation of tRNAs on improperly translocated ribosomes. Binds to mitochondrial ribosomes in a GTP-dependent manner. This Oryza sativa subsp. japonica (Rice) protein is Translation factor GUF1 homolog, mitochondrial.